Consider the following 191-residue polypeptide: Protein GrpE (191 aa).

Belongs to the GrpE family. As to quaternary structure, homodimer.

It localises to the cytoplasm. Its function is as follows. Participates actively in the response to hyperosmotic and heat shock by preventing the aggregation of stress-denatured proteins, in association with DnaK and GrpE. It is the nucleotide exchange factor for DnaK and may function as a thermosensor. Unfolded proteins bind initially to DnaJ; upon interaction with the DnaJ-bound protein, DnaK hydrolyzes its bound ATP, resulting in the formation of a stable complex. GrpE releases ADP from DnaK; ATP binding to DnaK triggers the release of the substrate protein, thus completing the reaction cycle. Several rounds of ATP-dependent interactions between DnaJ, DnaK and GrpE are required for fully efficient folding. The protein is Protein GrpE of Listeria welshimeri serovar 6b (strain ATCC 35897 / DSM 20650 / CCUG 15529 / CIP 8149 / NCTC 11857 / SLCC 5334 / V8).